A 194-amino-acid polypeptide reads, in one-letter code: Peptidyl-tRNA hydrolase (194 aa).

A tRNA-binding site is contributed by Y17. H22 acts as the Proton acceptor in catalysis. Residues Y68, N70, and N116 each contribute to the tRNA site.

The protein belongs to the PTH family. Monomer.

It is found in the cytoplasm. The catalysed reaction is an N-acyl-L-alpha-aminoacyl-tRNA + H2O = an N-acyl-L-amino acid + a tRNA + H(+). Hydrolyzes ribosome-free peptidyl-tRNAs (with 1 or more amino acids incorporated), which drop off the ribosome during protein synthesis, or as a result of ribosome stalling. In terms of biological role, catalyzes the release of premature peptidyl moieties from peptidyl-tRNA molecules trapped in stalled 50S ribosomal subunits, and thus maintains levels of free tRNAs and 50S ribosomes. This chain is Peptidyl-tRNA hydrolase, found in Pseudomonas aeruginosa (strain LESB58).